Here is a 213-residue protein sequence, read N- to C-terminus: uncharacterized protein (213 aa).

S-adenosyl-L-methionine-binding residues include Gly53, Glu74, and Asp97.

This sequence belongs to the methyltransferase superfamily. YrrT family.

Its function is as follows. Could be a S-adenosyl-L-methionine-dependent methyltransferase. This is an uncharacterized protein from Bacillus subtilis (strain 168).